The following is a 170-amino-acid chain: Phosphopantetheine adenylyltransferase (170 aa).

Position 10 (Thr10) interacts with substrate. ATP-binding positions include 10–11 and His18; that span reads TF. Substrate is bound by residues Lys42, Val79, and Arg93. ATP contacts are provided by residues 94–96, Glu104, and 129–135; these read GLR and TQFISST.

It belongs to the bacterial CoaD family. As to quaternary structure, homohexamer. Mg(2+) serves as cofactor.

The protein localises to the cytoplasm. It catalyses the reaction (R)-4'-phosphopantetheine + ATP + H(+) = 3'-dephospho-CoA + diphosphate. It functions in the pathway cofactor biosynthesis; coenzyme A biosynthesis; CoA from (R)-pantothenate: step 4/5. Functionally, reversibly transfers an adenylyl group from ATP to 4'-phosphopantetheine, yielding dephospho-CoA (dPCoA) and pyrophosphate. The sequence is that of Phosphopantetheine adenylyltransferase from Parvibaculum lavamentivorans (strain DS-1 / DSM 13023 / NCIMB 13966).